The chain runs to 761 residues: Protein PHTF1 (761 aa).

Positions 6 to 150 constitute a PHTF domain; sequence RDAISWYQKK…VHCQIVSTQI (145 aa). 3 helical membrane passes run 77–97, 99–119, and 121–141; these read GLVR…VTSL, IFVW…LYLL, and PIVS…MGTV. The segment at 152 to 184 is disordered; the sequence is RPSGNNGNRRRRKLRKTVNGDGSRDNGNNSPDK. The segment covering 170–181 has biased composition (low complexity); the sequence is NGDGSRDNGNNS. 2 N-linked (GlcNAc...) asparagine glycosylation sites follow: N179 and N224. A phosphoserine mark is found at S272, S276, S277, S333, and S335. The segment at 345–414 is disordered; sequence VFSQGSRSGM…NTIHSGTKRD (70 aa). The segment covering 347 to 363 has biased composition (low complexity); it reads SQGSRSGMSGGSRSLNL. An N-linked (GlcNAc...) asparagine glycan is attached at N362. Residues 364-375 show a composition bias toward basic and acidic residues; it reads SRRDSESTRHDS. N-linked (GlcNAc...) asparagine glycosylation is present at N430. 4 helical membrane passes run 472-492, 514-534, 610-630, and 644-664; these read GVGY…FPFL, TLFC…INFI, VVVS…CAQV, and WEFL…ASLG. N673 and N732 each carry an N-linked (GlcNAc...) asparagine glycan. Residues 736 to 756 form a helical membrane-spanning segment; sequence VVILSAVSGVISDLLGFNIRL.

Interacts with FEM1B. As to expression, widely expressed with highest levels in testis.

The protein localises to the endoplasmic reticulum membrane. It is found in the golgi apparatus. Its subcellular location is the cis-Golgi network membrane. The chain is Protein PHTF1 from Mus musculus (Mouse).